Here is a 573-residue protein sequence, read N- to C-terminus: Phosphoenolpyruvate-protein phosphotransferase (573 aa).

His190 functions as the Tele-phosphohistidine intermediate in the catalytic mechanism. Substrate-binding residues include Arg297 and Arg333. Positions 432 and 456 each coordinate Mg(2+). 455–456 is a phosphoenolpyruvate binding site; it reads ND. Residue Arg466 participates in substrate binding. Residue Cys503 is the Proton donor of the active site.

It belongs to the PEP-utilizing enzyme family. In terms of assembly, homodimer. Mg(2+) serves as cofactor.

The protein localises to the cytoplasm. The catalysed reaction is L-histidyl-[protein] + phosphoenolpyruvate = N(pros)-phospho-L-histidyl-[protein] + pyruvate. Functionally, general (non sugar-specific) component of the phosphoenolpyruvate-dependent sugar phosphotransferase system (sugar PTS). This major carbohydrate active-transport system catalyzes the phosphorylation of incoming sugar substrates concomitantly with their translocation across the cell membrane. Enzyme I transfers the phosphoryl group from phosphoenolpyruvate (PEP) to the phosphoryl carrier protein (HPr). The sequence is that of Phosphoenolpyruvate-protein phosphotransferase (ptsI) from Staphylococcus carnosus (strain TM300).